Here is a 476-residue protein sequence, read N- to C-terminus: Rho GTPase-activating protein 68F (476 aa).

Disordered regions lie at residues 1-35 and 241-266; these read MDAH…DLHD and DKLN…QQQH. Residues Ser-29 and Ser-31 each carry the phosphoserine modification. In terms of domain architecture, CRAL-TRIO spans 91–244; that stretch reads SENFQTPRNK…NICDLDDKLN (154 aa). Position 251 is a phosphothreonine (Thr-251). Residues 257 to 266 show a composition bias toward polar residues; the sequence is NINASRQQQH. The Rho-GAP domain occupies 276–464; the sequence is VPLKFIVMNS…FVLQNHKDIY (189 aa).

Functions as a GTPase-activating protein (GAP) for RhoA/Rho1 during gastrulation by converting it to an inactive GDP-bound state. The chain is Rho GTPase-activating protein 68F (RhoGAP68F) from Drosophila melanogaster (Fruit fly).